A 303-amino-acid polypeptide reads, in one-letter code: Guanosine-inosine kinase (303 aa).

The protein belongs to the carbohydrate kinase PfkB family. As to quaternary structure, homodimer. The cofactor is Mg(2+).

It catalyses the reaction guanosine + ATP = GMP + ADP + H(+). The enzyme catalyses inosine + ATP = IMP + ADP + H(+). Its pathway is purine metabolism; IMP biosynthesis via salvage pathway; IMP from inosine: step 1/1. It functions in the pathway purine metabolism; GMP biosynthesis via salvage pathway. With respect to regulation, kinase activity is stimulated by pyrimidine nucleotides, especially CMP and CTP, and inhibited by AMP, ADP and GMP. Activity is stimulated by potassium or ammonium ions. In terms of biological role, catalyzes the phosphorylation of guanosine and inosine to GMP and IMP, respectively. Can also use deoxyguanosine. Shows a strong preference for guanosine. dATP, GTP and dGTP can serve as phosphate donors. This chain is Guanosine-inosine kinase, found in Exiguobacterium acetylicum (Brevibacterium acetylicum).